Consider the following 582-residue polypeptide: MQDKDLSTVQTFKRLWPIISPFKLGLVVSGIALVINALADAGLISLLKPLLDEGFGKADVSFLRTMSYVVVLVIFLRGISNFISSYCLSWVSGKVVMIMRRRIFKHLMFMPVPFFDQNSSGRLLSRITYDSELVANSSSGALITIVREGAYIISLLAVMLYTSWQLSIVLFLIGPIIAVLIRFVSKRFRELSKNMQNSMGELTSTAEQMLKGHKVVLSFGGQIVEEERFNHVSNDMRRKGMKMAVADAISNPVVQIIASFALAAVLYLATVPTIMDQNLTAGSFTVVFSSMLAMMRPLKSLTNVNAQFQKGMAACQTLFALLDLETEKDLGTHKGENVQGYLSFKNVTFTYQSRDEPALRNLSFDVEKGKTVALVGRSGSGKSTIANLVTRFYDVDQGEITLDGINIQDYRLSSLRKNCAVVSQQVHLFNDTIANNIAYAAKDKYSREEIIKAAKDAYAMEFIEKLEHGLDTVIGENGVNLSGGQRQRLAIARALLRNSPVLILDEATSALDTESERSIQLALEKLQKERTVIVIAHRLSTIENADEILVIEHGEIKERGSHSELLALNGAYKQLHHIQVNH.

Helical transmembrane passes span 15-35 (LWPI…ALVI), 68-88 (YVVV…SYCL), 140-160 (GALI…AVML), 161-181 (YTSW…AVLI), and 254-274 (VQII…VPTI). One can recognise an ABC transmembrane type-1 domain in the interval 27 to 310 (VVSGIALVIN…LTNVNAQFQK (284 aa)). Residues 342 to 578 (LSFKNVTFTY…NGAYKQLHHI (237 aa)) form the ABC transporter domain. 376-383 (GRSGSGKS) is an ATP binding site.

The protein belongs to the ABC transporter superfamily. Lipid exporter (TC 3.A.1.106) family. As to quaternary structure, homodimer.

It is found in the cell inner membrane. It catalyses the reaction ATP + H2O + lipid A-core oligosaccharideSide 1 = ADP + phosphate + lipid A-core oligosaccharideSide 2.. In terms of biological role, involved in lipopolysaccharide (LPS) biosynthesis. Translocates lipid A-core from the inner to the outer leaflet of the inner membrane. Transmembrane domains (TMD) form a pore in the inner membrane and the ATP-binding domain (NBD) is responsible for energy generation. The protein is ATP-dependent lipid A-core flippase of Pasteurella multocida (strain Pm70).